Here is a 247-residue protein sequence, read N- to C-terminus: RNA polymerase sigma factor FliA (247 aa).

The interval 22 to 94 (LIQRYAPLVK…MLDEVRKGDW (73 aa)) is sigma-70 factor domain-2. Residues 49–52 (DLMQ) carry the Interaction with polymerase core subunit RpoC motif. The interval 102–171 (NTRMVTDAIR…GLPEDTSLSH (70 aa)) is sigma-70 factor domain-3. The tract at residues 190 to 238 (AIAKLPERERLVLALYYDEELNLKEIGEVLGVSESRVSQLHSQCAARLR) is sigma-70 factor domain-4. Residues 212–231 (LKEIGEVLGVSESRVSQLHS) constitute a DNA-binding region (H-T-H motif).

The protein belongs to the sigma-70 factor family. FliA subfamily.

It localises to the cytoplasm. Sigma factors are initiation factors that promote the attachment of RNA polymerase to specific initiation sites and are then released. This sigma factor controls the expression of flagella-related genes. Required for the flagellin gene (fliC) expression. In Pseudomonas aeruginosa (strain ATCC 15692 / DSM 22644 / CIP 104116 / JCM 14847 / LMG 12228 / 1C / PRS 101 / PAO1), this protein is RNA polymerase sigma factor FliA.